A 424-amino-acid polypeptide reads, in one-letter code: Tol-Pal system protein TolB (424 aa).

The signal sequence occupies residues 1-24; sequence MNKARAIARWISFLLLIAAGQVCA.

This sequence belongs to the TolB family. As to quaternary structure, the Tol-Pal system is composed of five core proteins: the inner membrane proteins TolA, TolQ and TolR, the periplasmic protein TolB and the outer membrane protein Pal. They form a network linking the inner and outer membranes and the peptidoglycan layer.

It is found in the periplasm. In terms of biological role, part of the Tol-Pal system, which plays a role in outer membrane invagination during cell division and is important for maintaining outer membrane integrity. This Methylococcus capsulatus (strain ATCC 33009 / NCIMB 11132 / Bath) protein is Tol-Pal system protein TolB.